The sequence spans 113 residues: UPF0342 protein SEQ_0993 (113 aa).

Belongs to the UPF0342 family.

This Streptococcus equi subsp. equi (strain 4047) protein is UPF0342 protein SEQ_0993.